Consider the following 296-residue polypeptide: Farnesyl diphosphate synthase (296 aa).

Isopentenyl diphosphate-binding residues include lysine 46, arginine 49, and histidine 78. The Mg(2+) site is built by aspartate 85 and aspartate 91. Arginine 96 provides a ligand contact to (2E)-geranyl diphosphate. Residue arginine 97 participates in isopentenyl diphosphate binding. The (2E)-geranyl diphosphate site is built by lysine 182, threonine 183, glutamine 220, and lysine 237.

The protein belongs to the FPP/GGPP synthase family. Requires Mg(2+) as cofactor.

The protein localises to the cytoplasm. It catalyses the reaction isopentenyl diphosphate + (2E)-geranyl diphosphate = (2E,6E)-farnesyl diphosphate + diphosphate. The protein is Farnesyl diphosphate synthase (ispA) of Bacillus subtilis (strain 168).